Consider the following 166-residue polypeptide: Large ribosomal subunit protein uL10 (166 aa).

This sequence belongs to the universal ribosomal protein uL10 family. As to quaternary structure, part of the ribosomal stalk of the 50S ribosomal subunit. The N-terminus interacts with L11 and the large rRNA to form the base of the stalk. The C-terminus forms an elongated spine to which L12 dimers bind in a sequential fashion forming a multimeric L10(L12)X complex.

Functionally, forms part of the ribosomal stalk, playing a central role in the interaction of the ribosome with GTP-bound translation factors. The chain is Large ribosomal subunit protein uL10 from Oceanobacillus iheyensis (strain DSM 14371 / CIP 107618 / JCM 11309 / KCTC 3954 / HTE831).